The sequence spans 570 residues: MGEKPDKYEILQDLMRRRGFAWGSFEIYGGSRGFYDYGPLGATIKRKIERKIREAFQREGFFELETPDITPEKVFIASGHVEKFVDPLVECKKCGARFRADHLVEEALGIDTEGMSAEHLTQLIREHDIRCPECGGELSDVWYFNLMFETRIGPYGDQKGYLRPETAQGIFVNFRRLNAFARNKLPFGVFQIGKAYRNEISPRQGMLRLREFTQAEAEIFFNPNETEHPHFDEVKDEKLRLYPIEHQLKNLSMIELTAEEAVKKGYIMNTFFAYYMVMVKRVLLDIGIPEDKIRFRQQLPEERAHYSRDTWDAEIHSERFGWVECVGIANRGDYDLSRHMRESGADLTVLIHYDEPKIVKKLEVSLNMKRVGPKLKKDAKRINELIKGWGEEKKRELVELLEKEGKVTIEGYELEKDDFIIREVEEKITGEKIVPHVLEPSFGIDRPFYLLLENSLVIEEDRTYLRIKKDMAPIEVAVLPLVAKEPLKSIAYDIFRTLQKEGFIAVYDEKDTVGRRYMRYDEIGTPYCVTVDNQTPEDGTVTIRDRDTREQIRVKIEELPKKLRELIFES.

Arg-99 and Glu-165 together coordinate substrate. Residues 197 to 199 (RNE), 207 to 212 (LRLREF), 324 to 325 (EC), and 443 to 446 (GIDR) each bind ATP. Residue 212–216 (FTQAE) participates in substrate binding. Residue 439–443 (EPSFG) coordinates substrate.

The protein belongs to the class-II aminoacyl-tRNA synthetase family.

Its subcellular location is the cytoplasm. It catalyses the reaction tRNA(Gly) + glycine + ATP = glycyl-tRNA(Gly) + AMP + diphosphate. Its function is as follows. Catalyzes the attachment of glycine to tRNA(Gly). The chain is Glycine--tRNA ligase from Thermococcus kodakarensis (strain ATCC BAA-918 / JCM 12380 / KOD1) (Pyrococcus kodakaraensis (strain KOD1)).